We begin with the raw amino-acid sequence, 478 residues long: Sugar transporter ERD6-like 18 (478 aa).

Transmembrane regions (helical) follow at residues 31-51 (ITACVILSTFIAVCGSFSFGV), 71-91 (IAQFSAFASLSTLGAAIGALF), 110-130 (LLCIIGWFSIAFAKDVMWLNF), 133-153 (ISSGIGLGLISYVVPVYIAEI), 162-180 (FTFTNQLLQNSGLAMVYFS), 188-208 (ILALLGALPCFIQVIGLFFVP), 270-290 (TLVVGIGLMLIQQFSGSSAVL), 306-326 (IGSTLLGLFMIPKAMIGVILV), 333-353 (PLLLTSVSGMCITSMLIGVAF), 367-387 (VFTFICVTLYIGTYAIGLGGL), 407-427 (IVTLVSWSSSSIVTYAFNFLL), and 433-453 (GTFYVFGAVGGLALLFIWLLV).

It belongs to the major facilitator superfamily. Sugar transporter (TC 2.A.1.1) family. In terms of tissue distribution, expressed in leaf vasculature, stem and flowers.

The protein resides in the membrane. Functionally, sugar transporter. The polypeptide is Sugar transporter ERD6-like 18 (SFP2) (Arabidopsis thaliana (Mouse-ear cress)).